Consider the following 443-residue polypeptide: 3-phosphoshikimate 1-carboxyvinyltransferase (443 aa).

Residues K25, S26, and R30 each contribute to the 3-phosphoshikimate site. A phosphoenolpyruvate-binding site is contributed by K25. Positions 117 and 145 each coordinate phosphoenolpyruvate. 3-phosphoshikimate is bound by residues S188, S189, Q190, S217, E331, and H358. Residue Q190 participates in phosphoenolpyruvate binding. The active-site Proton acceptor is the E331. Residues R362, R404, and K428 each contribute to the phosphoenolpyruvate site.

It belongs to the EPSP synthase family. As to quaternary structure, monomer.

It localises to the cytoplasm. It carries out the reaction 3-phosphoshikimate + phosphoenolpyruvate = 5-O-(1-carboxyvinyl)-3-phosphoshikimate + phosphate. It participates in metabolic intermediate biosynthesis; chorismate biosynthesis; chorismate from D-erythrose 4-phosphate and phosphoenolpyruvate: step 6/7. Catalyzes the transfer of the enolpyruvyl moiety of phosphoenolpyruvate (PEP) to the 5-hydroxyl of shikimate-3-phosphate (S3P) to produce enolpyruvyl shikimate-3-phosphate and inorganic phosphate. The polypeptide is 3-phosphoshikimate 1-carboxyvinyltransferase (Tropheryma whipplei (strain TW08/27) (Whipple's bacillus)).